Here is a 311-residue protein sequence, read N- to C-terminus: Avirulence protein ATR1 (311 aa).

The N-terminal stretch at 1–15 (MRVCYFVLVPSVALA) is a signal peptide. The RxLR-dEER motif lies at 48–62 (RALRAQTALDDDEER). 2 WY domain regions span residues 127 to 209 (DEAL…VKCV) and 210 to 311 (ESED…IYSV).

This sequence belongs to the RxLR effector family. In terms of assembly, monomer. Interacts with defense protein RPP1 from several ecotypes including RPP1-NdA, RPP1-WsB, RPP1-EstA and RPP1-ZdrA, via their leucine-rich repeats (LLRs).

It is found in the secreted. It localises to the host cytoplasm. Secreted effector that acts as an elicitor of hypersensitive response (HR) specifically on plants carrying both defense protein RPP1 from several ecotypes including RPP1-NdA, RPP1-WsB, RPP1-EstA and RPP1-ZdrA. This chain is Avirulence protein ATR1, found in Hyaloperonospora arabidopsidis (strain Emoy2) (Downy mildew agent).